We begin with the raw amino-acid sequence, 422 residues long: Histidine--tRNA ligase (422 aa).

The protein belongs to the class-II aminoacyl-tRNA synthetase family. As to quaternary structure, homodimer.

The protein resides in the cytoplasm. It carries out the reaction tRNA(His) + L-histidine + ATP = L-histidyl-tRNA(His) + AMP + diphosphate + H(+). In Alcanivorax borkumensis (strain ATCC 700651 / DSM 11573 / NCIMB 13689 / SK2), this protein is Histidine--tRNA ligase.